We begin with the raw amino-acid sequence, 508 residues long: Phenylacetaldehyde synthase (508 aa).

Residues His-203 and His-318 each coordinate L-phenylalanine. Position 319 is an N6-(pyridoxal phosphate)lysine (Lys-319). Phe-348 lines the L-phenylalanine pocket.

Belongs to the group II decarboxylase family. As to quaternary structure, homotetramer. Requires pyridoxal 5'-phosphate as cofactor.

It carries out the reaction L-phenylalanine + O2 + H2O + H(+) = 2-phenylacetaldehyde + H2O2 + NH4(+) + CO2. Functionally, bifunctional enzyme that catalyzes the decarboxylation of L-phenylalanine to produce 2-phenylethylamine, which is then oxidized to form 2-phenylacetaldehyde, a constituent of floral scent in petals. 2-phenylacetaldehyde is a precursor of 2-phenylethanol, another constituent of floral scent in petals. This chain is Phenylacetaldehyde synthase, found in Rosa hybrid cultivar.